Consider the following 565-residue polypeptide: Ubiquitin carboxyl-terminal hydrolase 21 (565 aa).

The segment covering 1-14 has biased composition (basic and acidic residues); sequence MPQASEHRLGRTRE. The interval 1-103 is disordered; sequence MPQASEHRLG…PPPTVALPLP (103 aa). The segment covering 48–57 has biased composition (pro residues); that stretch reads MLRPLPPRPG. Basic and acidic residues predominate over residues 58 to 70; the sequence is LPDERLKKLELGR. Positions 134 to 152 match the Nuclear export signal motif; that stretch reads ELGAALSRLALRPEPPTLR. A USP domain is found at 212 to 558; that stretch reads VGLRNLGNTC…EGYVLFYQLM (347 aa). Cysteine 221 (nucleophile) is an active-site residue. Zn(2+) contacts are provided by cysteine 384, cysteine 387, cysteine 437, and cysteine 440. Catalysis depends on histidine 518, which acts as the Proton acceptor.

This sequence belongs to the peptidase C19 family. USP21 subfamily. As to quaternary structure, interacts with BEND3. Highly expressed in heart, pancreas and skeletal muscle. Also expressed in brain, placenta, liver and kidney, and at very low level in lung.

Its subcellular location is the cytoplasm. The protein resides in the nucleus. The catalysed reaction is Thiol-dependent hydrolysis of ester, thioester, amide, peptide and isopeptide bonds formed by the C-terminal Gly of ubiquitin (a 76-residue protein attached to proteins as an intracellular targeting signal).. Its function is as follows. Deubiquitinates histone H2A, a specific tag for epigenetic transcriptional repression, thereby acting as a coactivator. Deubiquitination of histone H2A releaves the repression of di- and trimethylation of histone H3 at 'Lys-4', resulting in regulation of transcriptional initiation. Regulates gene expression via histone H2A deubiquitination. Deubiquitinates BAZ2A/TIP5 leading to its stabilization. Also capable of removing NEDD8 from NEDD8 conjugates but has no effect on Sentrin-1 conjugates. Also acts as a negative regulator of the ribosome quality control (RQC) by mediating deubiquitination of 40S ribosomal proteins RPS10/eS10 and RPS20/uS10, thereby antagonizing ZNF598-mediated 40S ubiquitination. The protein is Ubiquitin carboxyl-terminal hydrolase 21 of Homo sapiens (Human).